The chain runs to 219 residues: Glutamine transport system permease protein GlnP (219 aa).

The Periplasmic portion of the chain corresponds to 1-22; it reads MQFDWSAIWPAIPLLIEGAKMT. The region spanning 19–209 is the ABC transmembrane type-1 domain; that stretch reads AKMTLWISVL…IITLVLSFIL (191 aa). The helical transmembrane segment at 23 to 43 threads the bilayer; sequence LWISVLGLAGGLVIGLLAGFA. At 44-53 the chain is on the cytoplasmic side; the sequence is RTFGGWIANH. The helical transmembrane segment at 54–74 threads the bilayer; it reads VALVFIEVIRGTPIVVQVMFI. Residues 75–88 are Periplasmic-facing; that stretch reads YFALPMAFNDLRID. The helical transmembrane segment at 89–109 threads the bilayer; the sequence is PFTAAVVTIMINSGAYIAEIT. Over 110–150 the chain is Cytoplasmic; that stretch reads RGAVLSIHKGFREAGLALGLSRWETIRYVILPLALRRMLPP. A helical membrane pass occupies residues 151 to 171; that stretch reads LGNQWIISIKDTSLFIVIGVA. The Periplasmic segment spans residues 172–187; the sequence is ELTRQGQEIIAGNFRA. Residues 188-208 traverse the membrane as a helical segment; the sequence is LEIWSAVAVFYLIITLVLSFI. Over 209 to 219 the chain is Cytoplasmic; the sequence is LRRLERRMKIL.

It belongs to the binding-protein-dependent transport system permease family. HisMQ subfamily.

It localises to the cell inner membrane. In terms of biological role, part of the binding-protein-dependent transport system for glutamine; probably responsible for the translocation of the substrate across the membrane. This is Glutamine transport system permease protein GlnP (glnP) from Escherichia coli O6:H1 (strain CFT073 / ATCC 700928 / UPEC).